Here is a 145-residue protein sequence, read N- to C-terminus: NADH-quinone oxidoreductase subunit A 1 (145 aa).

3 helical membrane-spanning segments follow: residues 18 to 38 (ILPL…LLLA), 71 to 91 (VPFY…VFIF), and 104 to 124 (GLIH…WLWL).

It belongs to the complex I subunit 3 family. As to quaternary structure, NDH-1 is composed of 14 different subunits. Subunits NuoA, H, J, K, L, M, N constitute the membrane sector of the complex.

It localises to the cell inner membrane. It carries out the reaction a quinone + NADH + 5 H(+)(in) = a quinol + NAD(+) + 4 H(+)(out). In terms of biological role, NDH-1 shuttles electrons from NADH, via FMN and iron-sulfur (Fe-S) centers, to quinones in the respiratory chain. The immediate electron acceptor for the enzyme in this species is believed to be ubiquinone. Couples the redox reaction to proton translocation (for every two electrons transferred, four hydrogen ions are translocated across the cytoplasmic membrane), and thus conserves the redox energy in a proton gradient. In Geotalea uraniireducens (strain Rf4) (Geobacter uraniireducens), this protein is NADH-quinone oxidoreductase subunit A 1.